Consider the following 449-residue polypeptide: Tubulin alpha-2 chain (449 aa).

Gln-11 is a binding site for GTP. Lys-40 carries the N6-acetyllysine modification. GTP contacts are provided by Glu-71, Ser-140, Gly-144, Thr-145, Thr-179, Asn-206, and Asn-228. Position 71 (Glu-71) interacts with Mg(2+). The active site involves Glu-254.

This sequence belongs to the tubulin family. As to quaternary structure, dimer of alpha and beta chains. A typical microtubule is a hollow water-filled tube with an outer diameter of 25 nm and an inner diameter of 15 nM. Alpha-beta heterodimers associate head-to-tail to form protofilaments running lengthwise along the microtubule wall with the beta-tubulin subunit facing the microtubule plus end conferring a structural polarity. Microtubules usually have 13 protofilaments but different protofilament numbers can be found in some organisms and specialized cells. Requires Mg(2+) as cofactor. In terms of processing, undergoes a tyrosination/detyrosination cycle, the cyclic removal and re-addition of a C-terminal tyrosine residue by the enzymes tubulin tyrosine carboxypeptidase (TTCP) and tubulin tyrosine ligase (TTL), respectively. Post-translationally, acetylation of alpha chains at Lys-40 stabilizes microtubules and affects affinity and processivity of microtubule motors. This modification has a role in multiple cellular functions, ranging from cell motility, cell cycle progression or cell differentiation to intracellular trafficking and signaling. During the early stages of oogenesis lky/Alpha-tubulin N-acetyltransferase 2 is the main acetyltransferase responsible for Lys-40 acetylation in germline cells while Atat/alpha-tubulin N-acetyltransferase 1 is the main acetyltransferase responsible for Lys-40 acetylation in somatic cells.

The protein localises to the cytoplasm. It is found in the cytoskeleton. The catalysed reaction is GTP + H2O = GDP + phosphate + H(+). Functionally, tubulin is the major constituent of microtubules, a cylinder consisting of laterally associated linear protofilaments composed of alpha- and beta-tubulin heterodimers. Microtubules grow by the addition of GTP-tubulin dimers to the microtubule end, where a stabilizing cap forms. Below the cap, tubulin dimers are in GDP-bound state, owing to GTPase activity of alpha-tubulin. The sequence is that of Tubulin alpha-2 chain (alphaTub85E) from Drosophila melanogaster (Fruit fly).